We begin with the raw amino-acid sequence, 276 residues long: Putative pyruvate, phosphate dikinase regulatory protein (276 aa).

Position 154-161 (154-161) interacts with ADP; that stretch reads GVSRTSKS.

This sequence belongs to the pyruvate, phosphate/water dikinase regulatory protein family. PDRP subfamily.

It catalyses the reaction N(tele)-phospho-L-histidyl/L-threonyl-[pyruvate, phosphate dikinase] + ADP = N(tele)-phospho-L-histidyl/O-phospho-L-threonyl-[pyruvate, phosphate dikinase] + AMP + H(+). The enzyme catalyses N(tele)-phospho-L-histidyl/O-phospho-L-threonyl-[pyruvate, phosphate dikinase] + phosphate + H(+) = N(tele)-phospho-L-histidyl/L-threonyl-[pyruvate, phosphate dikinase] + diphosphate. Functionally, bifunctional serine/threonine kinase and phosphorylase involved in the regulation of the pyruvate, phosphate dikinase (PPDK) by catalyzing its phosphorylation/dephosphorylation. The protein is Putative pyruvate, phosphate dikinase regulatory protein of Wolbachia pipientis wMel.